We begin with the raw amino-acid sequence, 480 residues long: Ribosomal protein uS12 methylthiotransferase RimO (480 aa).

The region spanning 14–135 (LSVAMVTLGC…IAARLRSIVA (122 aa)) is the MTTase N-terminal domain. 6 residues coordinate [4Fe-4S] cluster: cysteine 23, cysteine 59, cysteine 98, cysteine 193, cysteine 197, and cysteine 200. The region spanning 179–410 (LDDGPTAALK…DLVEELTSQR (232 aa)) is the Radical SAM core domain. Positions 412 to 480 (AERLGEQVEV…EGADLDARPL (69 aa)) constitute a TRAM domain.

This sequence belongs to the methylthiotransferase family. RimO subfamily. The cofactor is [4Fe-4S] cluster.

The protein resides in the cytoplasm. The catalysed reaction is L-aspartate(89)-[ribosomal protein uS12]-hydrogen + (sulfur carrier)-SH + AH2 + 2 S-adenosyl-L-methionine = 3-methylsulfanyl-L-aspartate(89)-[ribosomal protein uS12]-hydrogen + (sulfur carrier)-H + 5'-deoxyadenosine + L-methionine + A + S-adenosyl-L-homocysteine + 2 H(+). In terms of biological role, catalyzes the methylthiolation of an aspartic acid residue of ribosomal protein uS12. The protein is Ribosomal protein uS12 methylthiotransferase RimO of Nocardioides sp. (strain ATCC BAA-499 / JS614).